The sequence spans 305 residues: Mas-related G-protein coupled receptor member A8 (305 aa).

The Extracellular portion of the chain corresponds to 1–17 (MDKTILGSIDIETLIRH). A helical transmembrane segment spans residues 18–38 (LMIIIFGLVGLTGNAIVFWLL). Residues 39 to 46 (GFHLHRNA) lie on the Cytoplasmic side of the membrane. The chain crosses the membrane as a helical span at residues 47–67 (FLVYILNLALADFFYLLCHII). Residues 68–85 (NSIMFLLKVPSPNIILDH) are Extracellular-facing. The helical transmembrane segment at 86 to 106 (CFYTIMIVLYITGLSMLSAIS) threads the bilayer. The Cytoplasmic segment spans residues 107–129 (TERCLSVLCPIWYRCHRPEHTST). The chain crosses the membrane as a helical span at residues 130–150 (AMCAVIWVMSLLISILNGYFC). 2 N-linked (GlcNAc...) asparagine glycosylation sites follow: N151 and N159. The Extracellular segment spans residues 151-172 (NFSSPKYVNNSVCQASDIFIRT). The chain crosses the membrane as a helical span at residues 173 to 193 (YPIFLFVLLCLSTLALLARLF). Topologically, residues 194 to 207 (SGAGKRKFTRLFVT) are cytoplasmic. A helical transmembrane segment spans residues 208-228 (IMLAILVFLLCGLPLGFFWFL). The Extracellular segment spans residues 229–243 (SPWIEDRFIVLDYRL). Residues 244 to 264 (FFASVVLTVVNSCANPIIYFF) traverse the membrane as a helical segment. At 265–305 (VGSFRHRLKQQTLKMFLQRALQDTPETPENMVEMSRSKAEP) the chain is on the cytoplasmic side.

Belongs to the G-protein coupled receptor 1 family. Mas subfamily. Expressed in a subset of sensory neurons that includes nociceptors. Expressed in the subclass of non-peptidergic sensory neurons that are IB4(+) and VR1(-).

It is found in the cell membrane. Orphan receptor. May be a receptor for RFamide-family neuropeptides such as NPFF and NPAF, which are analgesic in vivo. May regulate nociceptor function and/or development, including the sensation or modulation of pain. The protein is Mas-related G-protein coupled receptor member A8 (Mrgpra8) of Mus musculus (Mouse).